A 178-amino-acid chain; its full sequence is Ribosome maturation factor RimM (178 aa).

The PRC barrel domain occupies 100–173; it reads ADEYFIHQLY…QIVVRLLPGL (74 aa).

The protein belongs to the RimM family. In terms of assembly, binds ribosomal protein uS19.

The protein localises to the cytoplasm. In terms of biological role, an accessory protein needed during the final step in the assembly of 30S ribosomal subunit, possibly for assembly of the head region. Essential for efficient processing of 16S rRNA. May be needed both before and after RbfA during the maturation of 16S rRNA. It has affinity for free ribosomal 30S subunits but not for 70S ribosomes. In Roseiflexus castenholzii (strain DSM 13941 / HLO8), this protein is Ribosome maturation factor RimM.